The chain runs to 273 residues: S-adenosylmethionine decarboxylase proenzyme (273 aa).

The Schiff-base intermediate with substrate; via pyruvic acid role is filled by serine 118. The residue at position 118 (serine 118) is a Pyruvic acid (Ser); by autocatalysis. Residue histidine 123 is the Proton acceptor; for processing activity of the active site. Cysteine 146 serves as the catalytic Proton donor; for catalytic activity.

The protein belongs to the prokaryotic AdoMetDC family. Type 2 subfamily. In terms of assembly, heterooctamer of four alpha and four beta chains arranged as a tetramer of alpha/beta heterodimers. It depends on pyruvate as a cofactor. Post-translationally, is synthesized initially as an inactive proenzyme. Formation of the active enzyme involves a self-maturation process in which the active site pyruvoyl group is generated from an internal serine residue via an autocatalytic post-translational modification. Two non-identical subunits are generated from the proenzyme in this reaction, and the pyruvate is formed at the N-terminus of the alpha chain, which is derived from the carboxyl end of the proenzyme. The post-translation cleavage follows an unusual pathway, termed non-hydrolytic serinolysis, in which the side chain hydroxyl group of the serine supplies its oxygen atom to form the C-terminus of the beta chain, while the remainder of the serine residue undergoes an oxidative deamination to produce ammonia and the pyruvoyl group blocking the N-terminus of the alpha chain.

The enzyme catalyses S-adenosyl-L-methionine + H(+) = S-adenosyl 3-(methylsulfanyl)propylamine + CO2. It functions in the pathway amine and polyamine biosynthesis; S-adenosylmethioninamine biosynthesis; S-adenosylmethioninamine from S-adenosyl-L-methionine: step 1/1. Functionally, catalyzes the decarboxylation of S-adenosylmethionine to S-adenosylmethioninamine (dcAdoMet), the propylamine donor required for the synthesis of the polyamines spermine and spermidine from the diamine putrescine. This chain is S-adenosylmethionine decarboxylase proenzyme, found in Alkalilimnicola ehrlichii (strain ATCC BAA-1101 / DSM 17681 / MLHE-1).